The primary structure comprises 502 residues: ATP synthase subunit alpha (502 aa).

Residue 169 to 176 (GDRQVGKT) coordinates ATP.

Belongs to the ATPase alpha/beta chains family. F-type ATPases have 2 components, CF(1) - the catalytic core - and CF(0) - the membrane proton channel. CF(1) has five subunits: alpha(3), beta(3), gamma(1), delta(1), epsilon(1). CF(0) has three main subunits: a(1), b(2) and c(9-12). The alpha and beta chains form an alternating ring which encloses part of the gamma chain. CF(1) is attached to CF(0) by a central stalk formed by the gamma and epsilon chains, while a peripheral stalk is formed by the delta and b chains.

It localises to the cell membrane. The enzyme catalyses ATP + H2O + 4 H(+)(in) = ADP + phosphate + 5 H(+)(out). Functionally, produces ATP from ADP in the presence of a proton gradient across the membrane. The alpha chain is a regulatory subunit. This chain is ATP synthase subunit alpha, found in Lysinibacillus sphaericus (strain C3-41).